The primary structure comprises 190 residues: Large ribosomal subunit protein uL5 (190 aa).

It belongs to the universal ribosomal protein uL5 family. Part of the 50S ribosomal subunit; part of the 5S rRNA/L5/L18/L25 subcomplex. Contacts the 5S rRNA and the P site tRNA. Forms a bridge to the 30S subunit in the 70S ribosome.

In terms of biological role, this is one of the proteins that bind and probably mediate the attachment of the 5S RNA into the large ribosomal subunit, where it forms part of the central protuberance. In the 70S ribosome it contacts protein S13 of the 30S subunit (bridge B1b), connecting the 2 subunits; this bridge is implicated in subunit movement. Contacts the P site tRNA; the 5S rRNA and some of its associated proteins might help stabilize positioning of ribosome-bound tRNAs. The polypeptide is Large ribosomal subunit protein uL5 (Bifidobacterium adolescentis (strain ATCC 15703 / DSM 20083 / NCTC 11814 / E194a)).